The following is a 552-amino-acid chain: Urocanate hydratase (552 aa).

NAD(+) contacts are provided by residues 49-50, Gln-127, 173-175, Asp-193, 239-240, 260-264, 270-271, and Tyr-319; these read GG, GMG, NA, QTSAH, and YI. Residue Cys-407 is part of the active site. Gly-489 provides a ligand contact to NAD(+).

Belongs to the urocanase family. It depends on NAD(+) as a cofactor.

The protein localises to the cytoplasm. It catalyses the reaction 4-imidazolone-5-propanoate = trans-urocanate + H2O. Its pathway is amino-acid degradation; L-histidine degradation into L-glutamate; N-formimidoyl-L-glutamate from L-histidine: step 2/3. Catalyzes the conversion of urocanate to 4-imidazolone-5-propionate. The polypeptide is Urocanate hydratase (Bacillus cereus (strain ATCC 10987 / NRS 248)).